The chain runs to 551 residues: E3 SUMO-protein ligase CBX4 (551 aa).

One can recognise a Chromo domain in the interval 11 to 69 (FAVESIEKKRIRKGRVEYLVKWRGWSPKYNTWEPEENILDPRLLIAFQNRERQEQLMGY). Glycyl lysine isopeptide (Lys-Gly) (interchain with G-Cter in SUMO2) cross-links involve residues lysine 77, lysine 106, lysine 114, and lysine 125. The interval 125–152 (KKHHQYQPHSKERSGKPPPPGKSGKYYY) is disordered. Lysine 149 carries the post-translational modification N6-acetyllysine; alternate. Lysine 149 participates in a covalent cross-link: Glycyl lysine isopeptide (Lys-Gly) (interchain with G-Cter in SUMO2); alternate. Glycyl lysine isopeptide (Lys-Gly) (interchain with G-Cter in SUMO2) cross-links involve residues lysine 157, lysine 167, and lysine 178. The disordered stretch occupies residues 172–193 (QYQGGHKEAPSPTCPDLGTKSH). Serine 182 is subject to Phosphoserine. Glycyl lysine isopeptide (Lys-Gly) (interchain with G-Cter in SUMO2) cross-links involve residues lysine 191, lysine 205, lysine 212, lysine 223, lysine 249, lysine 268, lysine 278, and lysine 280. Residues 216–244 (GGAGAPGKGSEKGPPNGMTPAPKEAVTGN) are disordered. 3 stretches are compositionally biased toward basic and acidic residues: residues 281-291 (SGEAAEGEARS), 298-310 (AAEE…DRTF), and 317-332 (SEEK…REEE). Disordered stretches follow at residues 281–399 (SGEA…TVGL) and 430–451 (TPTC…PTAA). Glycyl lysine isopeptide (Lys-Gly) (interchain with G-Cter in SUMO2) cross-links involve residues lysine 321, lysine 353, and lysine 366. Residues 381–396 (PAHHHHHHHHHHHHHT) show a composition bias toward basic residues. Residue serine 463 is modified to Phosphoserine. Lysine 490 participates in a covalent cross-link: Glycyl lysine isopeptide (Lys-Gly) (interchain with G-Cter in SUMO2); alternate. Lysine 490 is covalently cross-linked (Glycyl lysine isopeptide (Lys-Gly) (interchain with G-Cter in SUMO); alternate).

In terms of assembly, interacts with SUV39H1 and HIPK2. Interacts with CSNK2B. Component of a PRC1-like complex. The composition of the PRC1 complex differs between the PRC1 complex in pluripotent embryonic stem cells containing RNF2, CBX7 and PCGF2, and the PRC1 complex in differentiating cells containing RNF2, CBX2, CBX4 and BMI1. Interacts with RNF2. Interacts (via chromodomain) with histone H3K9Me3 and single-stranded RNA (ssRNA). Interacts with CHTOP. May interact with H3C15 and H3C1. Interacts with PRDM1. Post-translationally, ubiquitinated. Ubiquitination regulates the function of the Polycomb group (PcG) multiprotein PRC1-like complex. Deubiquitinated by USP26. In terms of tissue distribution, expressed in embryoid bodies.

It localises to the nucleus. It is found in the nucleus speckle. Its pathway is protein modification; protein sumoylation. Its function is as follows. E3 SUMO-protein ligase that catalyzes sumoylation of target proteins by promoting the transfer of SUMO from the E2 enzyme to the substrate. Involved in the sumoylation of HNRNPK, a p53/TP53 transcriptional coactivator, hence indirectly regulates p53/TP53 transcriptional activation resulting in p21/CDKN1A expression. Functionally, component of a Polycomb group (PcG) multiprotein PRC1-like complex, a complex class required to maintain the transcriptionally repressive state of many genes, including Hox genes, throughout development. PcG PRC1 complex acts via chromatin remodeling and modification of histones; it mediates monoubiquitination of histone H2A 'Lys-119', rendering chromatin heritably changed in its expressibility. Binds to histone H3 trimethylated at 'Lys-9' (H3K9me3). Plays a role in the lineage differentiation of the germ layers in embryonic development. This chain is E3 SUMO-protein ligase CBX4 (Cbx4), found in Mus musculus (Mouse).